Reading from the N-terminus, the 320-residue chain is 1-aminocyclopropane-1-carboxylate oxidase 3 (320 aa).

The stretch at 111-131 forms a coiled coil; that stretch reads NEYRLAMKDFGKRLEILAEEL. Residues 155–256 enclose the Fe2OG dioxygenase domain; it reads GPTFATKLSN…RMSIASFYNP (102 aa). His180, Asp182, and His237 together coordinate Fe cation. Position 247 (Arg247) interacts with 2-oxoglutarate.

This sequence belongs to the iron/ascorbate-dependent oxidoreductase family. Fe(2+) is required as a cofactor.

It carries out the reaction 1-aminocyclopropane-1-carboxylate + L-ascorbate + O2 = ethene + L-dehydroascorbate + hydrogen cyanide + CO2 + 2 H2O. Its pathway is alkene biosynthesis; ethylene biosynthesis via S-adenosyl-L-methionine; ethylene from S-adenosyl-L-methionine: step 2/2. Functionally, enzyme involved in the ethylene biosynthesis. May promote stem elongation by maximizing the extensibility cells, possibly by activating ethylene biosynthesis, in response to very-long-chain fatty acids (VLCFAs C20:0 to C30:0). The protein is 1-aminocyclopropane-1-carboxylate oxidase 3 of Arabidopsis thaliana (Mouse-ear cress).